A 359-amino-acid polypeptide reads, in one-letter code: 4-hydroxyproline 2-epimerase (359 aa).

The active-site Proton acceptor is the Cys-126. Residues 127–128 (GH), His-248, and Asp-274 each bind substrate. The Proton donor role is filled by Cys-278. 279 to 280 (GT) provides a ligand contact to substrate.

This sequence belongs to the proline racemase family.

It catalyses the reaction trans-4-hydroxy-L-proline = cis-4-hydroxy-D-proline. Catalyzes the epimerization of trans-4-hydroxy-L-proline (t4LHyp) to cis-4-hydroxy-D-proline (c4DHyp). Is likely involved in a degradation pathway that converts t4LHyp to alpha-ketoglutarate. Displays no proline racemase activity. This Planctopirus limnophila (strain ATCC 43296 / DSM 3776 / IFAM 1008 / Mu 290) (Planctomyces limnophilus) protein is 4-hydroxyproline 2-epimerase.